Reading from the N-terminus, the 160-residue chain is Putative control protein C.MjaVP (160 aa).

May be involved in control of expression of the type II restriction enzyme MjaV and/or its methyltransferase M.MjaV. The polypeptide is Putative control protein C.MjaVP (Methanocaldococcus jannaschii (strain ATCC 43067 / DSM 2661 / JAL-1 / JCM 10045 / NBRC 100440) (Methanococcus jannaschii)).